The following is a 221-amino-acid chain: Toll/interleukin-1 receptor domain-containing adapter protein (221 aa).

The disordered stretch occupies residues M1–W82. Residues S48–P67 are compositionally biased toward low complexity. Residues K84–V213 form the TIR domain. 2 disulfides stabilise this stretch: C89–C134 and C142–C174.

As to quaternary structure, homodimer. Also forms heterodimers with MYD88. May interact with PIK3AP1. Interacts with TLR4 and IRAK2 via their respective TIR domains. Interacts with BMX and TBK1. Interacts with EIF2AK2. Does not interact with IRAK1, nor TLR9. Interacts with TLR2. Interacts with RAGE/AGER. In terms of assembly, (Microbial infection) In case of infection, interacts with B.melitensis protein TcpB (AC Q8YF53); TcpB abolishes the TLR4-TIRAP interaction and downstream signaling. Post-translationally, phosphorylated by IRAK1 and IRAK4. Also phosphorylated by BTK. Polyubiquitinated. Polyubiquitination follows phosphorylation by BTK and leads to TIRAP degradation. As to expression, highly expressed in liver, kidney, spleen, skeletal muscle and heart. Also detected in peripheral blood leukocytes, lung, placenta, small intestine, thymus, colon and brain.

The protein localises to the cytoplasm. Its subcellular location is the cell membrane. The protein resides in the membrane. In terms of biological role, adapter involved in TLR2, TLR4 and RAGE signaling pathways in the innate immune response. Acts via IRAK2 and TRAF-6, leading to the activation of NF-kappa-B, MAPK1, MAPK3 and JNK, and resulting in cytokine secretion and the inflammatory response. Positively regulates the production of TNF-alpha (TNF) and interleukin-6 (IL6). This Homo sapiens (Human) protein is Toll/interleukin-1 receptor domain-containing adapter protein (TIRAP).